The sequence spans 392 residues: tRNA (guanine(26)-N(2)/guanine(27)-N(2))-dimethyltransferase (392 aa).

The 374-residue stretch at 2-375 folds into the Trm1 methyltransferase domain; it reads EIVQEGIAKI…LSFEEVMKKM (374 aa). Arg36, Arg66, Asp84, Glu113, and Ala114 together coordinate S-adenosyl-L-methionine. Residues Cys247, Cys250, Cys266, and Cys269 each contribute to the Zn(2+) site.

The protein belongs to the class I-like SAM-binding methyltransferase superfamily. Trm1 family.

It carries out the reaction guanosine(26)/guanosine(27) in tRNA + 4 S-adenosyl-L-methionine = N(2)-dimethylguanosine(26)/N(2)-dimethylguanosine(27) in tRNA + 4 S-adenosyl-L-homocysteine + 4 H(+). In terms of biological role, dimethylates the guanine residues at position 26 and 27 of one or more tRNAs using S-adenosyl-L-methionine as donor of the methyl groups. The chain is tRNA (guanine(26)-N(2)/guanine(27)-N(2))-dimethyltransferase from Aquifex aeolicus (strain VF5).